The primary structure comprises 641 residues: Toxin TseL (641 aa).

In terms of assembly, interacts with VgrG3; this interaction allows TseL secretion to target cells.

It localises to the secreted. In terms of biological role, toxin secreted by the type VI (T6SS) secretion system that acts on prokaryotic as well as eukaryotic target cells. The protein is Toxin TseL of Vibrio cholerae serotype O1 (strain ATCC 39315 / El Tor Inaba N16961).